The sequence spans 108 residues: N(4)-acetylcytidine amidohydrolase (108 aa).

The ASCH domain maps to 5–102 (ITFFQRLERS…NDLFFISFRV (98 aa)). Lys-20 functions as the Proton acceptor in the catalytic mechanism. Thr-23 serves as the catalytic Nucleophile. Glu-73 acts as the Proton donor in catalysis.

Belongs to the N(4)-acetylcytidine amidohydrolase family.

It catalyses the reaction N(4)-acetylcytidine + H2O = cytidine + acetate + H(+). The enzyme catalyses N(4)-acetyl-2'-deoxycytidine + H2O = 2'-deoxycytidine + acetate + H(+). It carries out the reaction N(4)-acetylcytosine + H2O = cytosine + acetate + H(+). Its function is as follows. Catalyzes the hydrolysis of N(4)-acetylcytidine (ac4C). The polypeptide is N(4)-acetylcytidine amidohydrolase (Moritella marina (Vibrio marinus)).